The following is a 372-amino-acid chain: THAP domain-containing protein 5 (372 aa).

The THAP-type zinc finger occupies 1 to 85 (MTRYCAATRC…LKPNAIPTLF (85 aa)). Residues 306–362 (TDRHYLRQKIAKLQSKIAVLEAQENATLSRLRLLESVIAKLKQENLLSDEKLKILEN) are a coiled coil.

It is found in the nucleus. The protein is THAP domain-containing protein 5 (thap5) of Xenopus laevis (African clawed frog).